The primary structure comprises 175 residues: uncharacterized protein (175 aa).

Residues 107-138 (KTEEEAEKTLQEIERKIFKKLWENLDKERKRE) adopt a coiled-coil conformation.

This is an uncharacterized protein from Aquifex aeolicus (strain VF5).